The following is a 251-amino-acid chain: Arginine and glutamate-rich protein 1-A (251 aa).

Basic residues predominate over residues 1–48 (MGRSRSRSSSRSKHSKHSRKRSRSKSKSKKRSRSKEPKRNRRSRSRSG). A necessary and sufficient for RNA binding region spans residues 1 to 53 (MGRSRSRSSSRSKHSKHSRKRSRSKSKSKKRSRSKEPKRNRRSRSRSGSRRDR). Disordered regions lie at residues 1–92 (MGRS…ERQR) and 215–251 (RMKL…KATE). 3 stretches are compositionally biased toward basic and acidic residues: residues 49–63 (SRRD…RTDM), 71–92 (RNND…ERQR), and 215–231 (RMKL…EEQK). Residues 54 to 251 (GGSPPDRTDM…RLSFSLKATE (198 aa)) form a necessary and sufficient for transcriptional regulation region.

Belongs to the ARGLU1 family.

It localises to the nucleus. It is found in the nucleus speckle. The protein localises to the chromosome. Dual function regulator of gene expression; regulator of transcription and modulator of alternative splicing. General coactivator of nuclear receptor-induced gene expression. In Danio rerio (Zebrafish), this protein is Arginine and glutamate-rich protein 1-A (arglu1a).